The following is a 353-amino-acid chain: F-box protein At2g14290 (353 aa).

Residues 6-58 (PRTWSELPPDLLGSIFHRLSFTDFHRAKIVCWNWNLSSKLTVPKKIRSPWLML) enclose the F-box domain.

The chain is F-box protein At2g14290 from Arabidopsis thaliana (Mouse-ear cress).